The following is a 537-amino-acid chain: Cytochrome bd ubiquinol oxidase subunit 1 (537 aa).

Residues 1 to 24 (MISESVVDLSRLQFAMTALYHFLF) are Cytoplasmic-facing. H21 contacts heme b. A helical membrane pass occupies residues 25 to 44 (VPLTLGMTFLLAIMESVYVM). The Periplasmic portion of the chain corresponds to 45-96 (TGKQVYKDMVKFWGKLFGINFALGVTTGITMEFQFGTNWAYYSHYVGDIFGA). The chain crosses the membrane as a helical span at residues 97 to 116 (PLAIEGLTAFFLESTFIGMF). Over 117 to 131 (FFGWDRLSKIQHLAV) the chain is Cytoplasmic. The helical transmembrane segment at 132–151 (TWLVALGSNLSALWILVANG) threads the bilayer. Topologically, residues 152 to 189 (WMQHPVGAEFNFETMRMELVDFGALLLNPVAQVKFVHT) are periplasmic. Residue H188 coordinates heme b. Residues 190 to 209 (VASGYVTGAVFVLAISSYYL) form a helical membrane-spanning segment. Over 210-221 (LKKRDLGFARRS) the chain is Cytoplasmic. The helical transmembrane segment at 222–241 (FAIASAFGMASILSVIVLGD) threads the bilayer. At 242 to 394 (ESGYEVGEVQ…VASMFWSFRA (153 aa)) the chain is on the periplasmic side. M395 contacts heme b. A helical membrane pass occupies residues 395 to 414 (MVGAGFAMLILFVCAFWASA). At 415 to 472 (RKNEESKPWLLKFALYSLPLPWIATQTGWFVAEHGRQPWTIGGVLPTHLSASSLSTGD) the chain is on the cytoplasmic side. Residues 473-492 (LWGSLIALIAFYTLLLVVEM) form a helical membrane-spanning segment. The Periplasmic segment spans residues 493–537 (YLMIRFARLGPSSLHTGRYHFEQLEQHAVKHASPSQADPQQPVNA).

This sequence belongs to the cytochrome ubiquinol oxidase subunit 1 family. In terms of assembly, heterodimer of subunits I and II. Heme b is required as a cofactor. Requires heme d cis-diol as cofactor.

It localises to the cell inner membrane. It carries out the reaction 2 a ubiquinol + O2(in) + 4 H(+)(in) = 2 a ubiquinone + 2 H2O(in) + 4 H(+)(out). Its function is as follows. May be involved in maintaining the low intracellular oxygen concentration required for nitrogen fixation. This is Cytochrome bd ubiquinol oxidase subunit 1 (cydA) from Azotobacter vinelandii.